A 329-amino-acid chain; its full sequence is Glucokinase (329 aa).

ATP is bound at residue 13–18 (GDIGGT).

This sequence belongs to the bacterial glucokinase family.

It localises to the cytoplasm. It carries out the reaction D-glucose + ATP = D-glucose 6-phosphate + ADP + H(+). This is Glucokinase from Caulobacter sp. (strain K31).